The chain runs to 240 residues: MILYPAIDLKDGQAVRLLHGDMDKTTVFNDNPAAQALEFVAAGCEWLHLVDLNGAFAGEPVNAAPVEEILRQCKVPAQLGGGIRDMATIERWLDKGLARVILGTVAVENPDLVREAARAFPGKVAVGIDARNGKVATKGWAEETDVEVTDLAKSFEDAGVAAIIYTDIMRDGAMKGPNIDATAALANAVSIPVIASGGVSSLEDLHALKSCGAALNGAISGRALYDGAIDLAEALAVLKG.

The Proton acceptor role is filled by D8. D129 (proton donor) is an active-site residue.

It belongs to the HisA/HisF family.

It is found in the cytoplasm. It catalyses the reaction 1-(5-phospho-beta-D-ribosyl)-5-[(5-phospho-beta-D-ribosylamino)methylideneamino]imidazole-4-carboxamide = 5-[(5-phospho-1-deoxy-D-ribulos-1-ylimino)methylamino]-1-(5-phospho-beta-D-ribosyl)imidazole-4-carboxamide. Its pathway is amino-acid biosynthesis; L-histidine biosynthesis; L-histidine from 5-phospho-alpha-D-ribose 1-diphosphate: step 4/9. The chain is 1-(5-phosphoribosyl)-5-[(5-phosphoribosylamino)methylideneamino] imidazole-4-carboxamide isomerase 2 from Ruegeria sp. (strain TM1040) (Silicibacter sp.).